We begin with the raw amino-acid sequence, 547 residues long: Chaperonin GroEL (547 aa).

ATP contacts are provided by residues 30–33, K51, 87–91, G415, 479–481, and D495; these read TLGP, DGTTT, and NAA.

The protein belongs to the chaperonin (HSP60) family. In terms of assembly, forms a cylinder of 14 subunits composed of two heptameric rings stacked back-to-back. Interacts with the co-chaperonin GroES.

Its subcellular location is the cytoplasm. It carries out the reaction ATP + H2O + a folded polypeptide = ADP + phosphate + an unfolded polypeptide.. Together with its co-chaperonin GroES, plays an essential role in assisting protein folding. The GroEL-GroES system forms a nano-cage that allows encapsulation of the non-native substrate proteins and provides a physical environment optimized to promote and accelerate protein folding. This is Chaperonin GroEL from Bordetella pertussis (strain Tohama I / ATCC BAA-589 / NCTC 13251).